The chain runs to 372 residues: tRNA-specific 2-thiouridylase MnmA (372 aa).

ATP-binding positions include 16 to 23 (GMSGGVDS) and M42. The interval 102–104 (NPD) is interaction with target base in tRNA. C107 serves as the catalytic Nucleophile. C107 and C205 are oxidised to a cystine. Residue G132 coordinates ATP. An interaction with tRNA region spans residues 155–157 (KDQ). C205 functions as the Cysteine persulfide intermediate in the catalytic mechanism. Positions 317-318 (RY) are interaction with tRNA.

Belongs to the MnmA/TRMU family.

The protein resides in the cytoplasm. It carries out the reaction S-sulfanyl-L-cysteinyl-[protein] + uridine(34) in tRNA + AH2 + ATP = 2-thiouridine(34) in tRNA + L-cysteinyl-[protein] + A + AMP + diphosphate + H(+). Catalyzes the 2-thiolation of uridine at the wobble position (U34) of tRNA, leading to the formation of s(2)U34. This is tRNA-specific 2-thiouridylase MnmA from Shewanella baltica (strain OS195).